Consider the following 233-residue polypeptide: 7-cyano-7-deazaguanine synthase (233 aa).

11 to 21 is an ATP binding site; it reads FSGGQDSTTCL. Zn(2+)-binding residues include cysteine 199, cysteine 214, cysteine 217, and cysteine 220.

The protein belongs to the QueC family. Requires Zn(2+) as cofactor.

It carries out the reaction 7-carboxy-7-deazaguanine + NH4(+) + ATP = 7-cyano-7-deazaguanine + ADP + phosphate + H2O + H(+). Its pathway is purine metabolism; 7-cyano-7-deazaguanine biosynthesis. Its function is as follows. Catalyzes the ATP-dependent conversion of 7-carboxy-7-deazaguanine (CDG) to 7-cyano-7-deazaguanine (preQ(0)). The polypeptide is 7-cyano-7-deazaguanine synthase (Herminiimonas arsenicoxydans).